The primary structure comprises 88 residues: Phosphocarrier protein HPr (88 aa).

The region spanning 1-88 (MKTQQFTVID…TLLTEMGLAQ (88 aa)) is the HPr domain. The Pros-phosphohistidine intermediate role is filled by histidine 15. A Phosphoserine; by HPrK/P modification is found at serine 46.

Belongs to the HPr family.

It is found in the cytoplasm. With respect to regulation, phosphorylation on Ser-46 inhibits the phosphoryl transfer from enzyme I to HPr. General (non sugar-specific) component of the phosphoenolpyruvate-dependent sugar phosphotransferase system (sugar PTS). This major carbohydrate active-transport system catalyzes the phosphorylation of incoming sugar substrates concomitantly with their translocation across the cell membrane. The phosphoryl group from phosphoenolpyruvate (PEP) is transferred to the phosphoryl carrier protein HPr by enzyme I. Phospho-HPr then transfers it to the PTS EIIA domain. Functionally, P-Ser-HPr interacts with the catabolite control protein A (CcpA), forming a complex that binds to DNA at the catabolite response elements cre, operator sites preceding a large number of catabolite-regulated genes. Thus, P-Ser-HPr is a corepressor in carbon catabolite repression (CCR), a mechanism that allows bacteria to coordinate and optimize the utilization of available carbon sources. P-Ser-HPr also plays a role in inducer exclusion, in which it probably interacts with several non-PTS permeases and inhibits their transport activity. This is Phosphocarrier protein HPr (ptsH) from Lysinibacillus sphaericus (Bacillus sphaericus).